The following is a 156-amino-acid chain: Ribosomal RNA large subunit methyltransferase H (156 aa).

S-adenosyl-L-methionine is bound by residues Leu-73, Gly-104, and 123–128 (LSALTL).

Belongs to the RNA methyltransferase RlmH family. Homodimer.

The protein localises to the cytoplasm. It carries out the reaction pseudouridine(1915) in 23S rRNA + S-adenosyl-L-methionine = N(3)-methylpseudouridine(1915) in 23S rRNA + S-adenosyl-L-homocysteine + H(+). Functionally, specifically methylates the pseudouridine at position 1915 (m3Psi1915) in 23S rRNA. This Shewanella piezotolerans (strain WP3 / JCM 13877) protein is Ribosomal RNA large subunit methyltransferase H.